The following is a 135-amino-acid chain: CDGSH iron-sulfur domain-containing protein 2B (135 aa).

The Lumenal portion of the chain corresponds to 1–37 (MMLESLARVFKVQLPAYLKRLPIPDSIAGFIRLTVLE). Residues 38–60 (WLRLLPFLGVLALLGYLAIRPFL) form a helical membrane-spanning segment. Topologically, residues 61–135 (PKKKQQKDSL…GPLILKKKEV (75 aa)) are cytoplasmic. Positions 99, 101, 110, and 114 each coordinate [2Fe-2S] cluster.

The protein belongs to the CISD protein family. CISD2 subfamily. In terms of assembly, homodimer. [2Fe-2S] cluster serves as cofactor.

It is found in the endoplasmic reticulum membrane. It localises to the mitochondrion outer membrane. Regulator of autophagy that contributes to antagonize becn1-mediated cellular autophagy at the endoplasmic reticulum. Participates in the interaction of bcl2 with becn1 and is required for bcl2-mediated depression of endoplasmic reticulum Ca(2+) stores during autophagy. The protein is CDGSH iron-sulfur domain-containing protein 2B (cisd2-b) of Xenopus laevis (African clawed frog).